Consider the following 165-residue polypeptide: Nucleotide-binding protein Chy400_2003 (165 aa).

The protein belongs to the YajQ family.

Nucleotide-binding protein. The polypeptide is Nucleotide-binding protein Chy400_2003 (Chloroflexus aurantiacus (strain ATCC 29364 / DSM 637 / Y-400-fl)).